Consider the following 345-residue polypeptide: Ferrochelatase (345 aa).

Positions 215 and 296 each coordinate Fe cation.

This sequence belongs to the ferrochelatase family.

The protein resides in the cytoplasm. It catalyses the reaction heme b + 2 H(+) = protoporphyrin IX + Fe(2+). It participates in porphyrin-containing compound metabolism; protoheme biosynthesis; protoheme from protoporphyrin-IX: step 1/1. Its function is as follows. Catalyzes the ferrous insertion into protoporphyrin IX. Essential for normal nodule development. This is Ferrochelatase from Bradyrhizobium diazoefficiens (strain JCM 10833 / BCRC 13528 / IAM 13628 / NBRC 14792 / USDA 110).